We begin with the raw amino-acid sequence, 147 residues long: Transcriptional regulator MraZ (147 aa).

2 consecutive SpoVT-AbrB domains span residues 5–51 (GTPV…PQPV) and 80–123 (ACDV…DSEK).

Belongs to the MraZ family. In terms of assembly, forms oligomers.

It localises to the cytoplasm. The protein localises to the nucleoid. This is Transcriptional regulator MraZ from Nitrosospira multiformis (strain ATCC 25196 / NCIMB 11849 / C 71).